The sequence spans 168 residues: Putative ankyrin repeat protein RBE_1411 (168 aa).

3 ANK repeats span residues 59–88 (TIFS…LQHK), 98–127 (YGDT…DLTI), and 131–160 (KGET…ILGN).

In Rickettsia bellii (strain RML369-C), this protein is Putative ankyrin repeat protein RBE_1411.